Reading from the N-terminus, the 245-residue chain is 5-oxoprolinase subunit A (245 aa).

It belongs to the LamB/PxpA family. In terms of assembly, forms a complex composed of PxpA, PxpB and PxpC.

The enzyme catalyses 5-oxo-L-proline + ATP + 2 H2O = L-glutamate + ADP + phosphate + H(+). Catalyzes the cleavage of 5-oxoproline to form L-glutamate coupled to the hydrolysis of ATP to ADP and inorganic phosphate. This chain is 5-oxoprolinase subunit A, found in Neisseria meningitidis serogroup A / serotype 4A (strain DSM 15465 / Z2491).